Reading from the N-terminus, the 331-residue chain is Ribosomal RNA small subunit methyltransferase H (331 aa).

Residues 39–41 (GGY), Asp-56, Phe-83, Asp-100, and Gln-107 contribute to the S-adenosyl-L-methionine site.

It belongs to the methyltransferase superfamily. RsmH family.

The protein localises to the cytoplasm. It catalyses the reaction cytidine(1402) in 16S rRNA + S-adenosyl-L-methionine = N(4)-methylcytidine(1402) in 16S rRNA + S-adenosyl-L-homocysteine + H(+). Functionally, specifically methylates the N4 position of cytidine in position 1402 (C1402) of 16S rRNA. In Bartonella bacilliformis (strain ATCC 35685 / KC583 / Herrer 020/F12,63), this protein is Ribosomal RNA small subunit methyltransferase H.